A 402-amino-acid chain; its full sequence is MNEFPVVLVINCGSSSIKFSVLDATHCDVLMAGIADGINSEDAFLSVNGGEPAKLAHHSYEGALKAIAFELEKRNLIDSVALIGHRIAHGGNIFTASAIITDEVIENIRRVSPLAPLHNYANLSGIESAQHLFPGVQQVAVFDTSFHQTMAPEAYLYGLPWKYFEELGVRRYGFHGTSHRYVSQRAHDLLALQEEDSGLVVAHLGNGASICAVRNGQSVDTSMGMTPLEGLMMGTRSGDVDFGAMAWIASETNQTLGDMERVVNKESGLLGISGLSSDLRVLEKAWHEGHERAQLAIKTFVHRIARHIAGHAASLHRLDGIIFTGGIGENSVLIRRLVIEHLAVLGVKLDHEMNSLPNSHGERIISSKDTNVICAVIPTNEEKMIALDAIHLGKVNAPVEFA.

ATP contacts are provided by asparagine 11 and lysine 18. Mg(2+) is bound at residue asparagine 11. Position 86 (arginine 86) interacts with substrate. Aspartate 143 serves as the catalytic Proton donor/acceptor. ATP-binding positions include histidine 175, 203–207 (HLGNG), 278–280 (DLR), and 326–330 (GIGEN).

The protein belongs to the acetokinase family. TdcD subfamily. In terms of assembly, homodimer. Mg(2+) is required as a cofactor.

The enzyme catalyses propanoate + ATP = propanoyl phosphate + ADP. It functions in the pathway amino-acid degradation; L-threonine degradation via propanoate pathway; propanoate from L-threonine: step 4/4. Catalyzes the conversion of propionyl phosphate and ADP to propionate and ATP. The chain is Propionate kinase from Citrobacter koseri (strain ATCC BAA-895 / CDC 4225-83 / SGSC4696).